Here is a 431-residue protein sequence, read N- to C-terminus: 3-deoxy-D-manno-octulosonic acid transferase (431 aa).

The helical; Signal-anchor transmembrane segment at 5–27 (WLTSRLYDAFLVCAFFVSAPRIF) threads the bilayer. The active-site Proton acceptor is E67. CMP-binding positions include 275–276 (PR), 315–317 (MGV), and 342–345 (NLLE).

It belongs to the glycosyltransferase group 1 family. Glycosyltransferase 30 subfamily.

Its subcellular location is the cell inner membrane. The enzyme catalyses lipid IVA (E. coli) + CMP-3-deoxy-beta-D-manno-octulosonate = alpha-Kdo-(2-&gt;6)-lipid IVA (E. coli) + CMP + H(+). It carries out the reaction alpha-Kdo-(2-&gt;6)-lipid IVA (E. coli) + CMP-3-deoxy-beta-D-manno-octulosonate = alpha-Kdo-(2-&gt;4)-alpha-Kdo-(2-&gt;6)-lipid IVA (E. coli) + CMP + H(+). It catalyses the reaction alpha-Kdo-(2-&gt;4)-alpha-Kdo-(2-&gt;6)-lipid IVA (E. coli) + CMP-3-deoxy-beta-D-manno-octulosonate = alpha-Kdo-(2-&gt;8)-alpha-Kdo-(2-&gt;4)-alpha-Kdo-(2-&gt;6)-lipid IVA (E. coli) + CMP + H(+). Its pathway is bacterial outer membrane biogenesis; LPS core biosynthesis. Functionally, involved in lipopolysaccharide (LPS) biosynthesis. Catalyzes the transfer of three 3-deoxy-D-manno-octulosonate (Kdo) residues from CMP-Kdo to lipid IV(A), the tetraacyldisaccharide-1,4'-bisphosphate precursor of lipid A. Thus generates the genus-specific LPS epitope of Chlamydia, composed of the trisaccharide alpha-Kdo-(2-&gt;8)-alpha-Kdo-(2-&gt;4)-alpha-Kdo. This Chlamydia trachomatis serovar D (strain ATCC VR-885 / DSM 19411 / UW-3/Cx) protein is 3-deoxy-D-manno-octulosonic acid transferase (waaA).